Here is a 462-residue protein sequence, read N- to C-terminus: MLAIFNTLTNKKEIFKPIHIGKVALYVCGVTAYDLCHIGHVRTFVTFDVVIRYLRYCGYEVNYIRNITDIEDKIIRKAANNGESCQQLTDRMIAEMHHDLDLLNILRPDKEPRATQHIKEIIQLTRQLIDKEHAYIASNGDVMFAIESANNYGILSSQNLNQLQIGQRVKITTVKRNPMDFVLWKMSKHGEPTWSSPWGNGRPGWHIECSAMSIKYLGKHFDIHGGGSDLIFPHHENEIAQSTCMENNPYVNFWMHSGMVTICNEKMSKSLSNFFTVRDVLKYYDAETVRYFLISSHYRKPLNYSEKSLQLARTALKSLYIALRNTKKEVIPSGGEYFIEQFMMAMNNDFNTPAAHAVLFQLAHEVNRLKTKNIKSAQGMAATLRYLANILGLLEQDPEVFLQKQKIVTDLNIALIEELVKQRNNIRKKHQWVQADKVREKLAAMGIVLEDTPQGTIWRRSF.

Position 28 (cysteine 28) interacts with Zn(2+). A 'HIGH' region motif is present at residues 30–40 (VTAYDLCHIGH). 3 residues coordinate Zn(2+): cysteine 209, histidine 234, and glutamate 238. The 'KMSKS' region signature appears at 266–270 (KMSKS). Lysine 269 contacts ATP.

This sequence belongs to the class-I aminoacyl-tRNA synthetase family. Monomer. The cofactor is Zn(2+).

The protein resides in the cytoplasm. The enzyme catalyses tRNA(Cys) + L-cysteine + ATP = L-cysteinyl-tRNA(Cys) + AMP + diphosphate. The chain is Cysteine--tRNA ligase from Baumannia cicadellinicola subsp. Homalodisca coagulata.